The primary structure comprises 174 residues: CD164 sialomucin-like 2 protein (174 aa).

An N-terminal signal peptide occupies residues 1–29; it reads MEAPGPRALRTALCGGCCCLLLCAQLAVA. The Extracellular segment spans residues 30-141; sequence GKGARGFGRG…AHSPGFDGAS (112 aa). Asn-71 and Asn-103 each carry an N-linked (GlcNAc...) asparagine glycan. Residues 142-162 traverse the membrane as a helical segment; the sequence is FIGGVVLVLSLQAVAFFVLHF. Over 163–174 the chain is Cytoplasmic; it reads LKAKDSTYQTLI.

This sequence belongs to the CD164 family.

It is found in the membrane. The polypeptide is CD164 sialomucin-like 2 protein (CD164L2) (Homo sapiens (Human)).